The chain runs to 114 residues: Large ribosomal subunit protein bL19 (114 aa).

Belongs to the bacterial ribosomal protein bL19 family.

Functionally, this protein is located at the 30S-50S ribosomal subunit interface and may play a role in the structure and function of the aminoacyl-tRNA binding site. The sequence is that of Large ribosomal subunit protein bL19 from Acetivibrio thermocellus (strain ATCC 27405 / DSM 1237 / JCM 9322 / NBRC 103400 / NCIMB 10682 / NRRL B-4536 / VPI 7372) (Clostridium thermocellum).